Reading from the N-terminus, the 336-residue chain is Ketol-acid reductoisomerase (NADP(+)) 1 (336 aa).

The KARI N-terminal Rossmann domain occupies 2–181 (AKVYYEKDVT…GATRAGVLET (180 aa)). NADP(+) contacts are provided by residues 25–28 (YGSQ), Arg-48, Ser-52, and 82–85 (DELQ). The active site involves His-107. Gly-133 contributes to the NADP(+) binding site. The KARI C-terminal knotted domain maps to 182-327 (TFKEETETDL…RKLREMMPFV (146 aa)). 4 residues coordinate Mg(2+): Asp-190, Glu-194, Glu-226, and Glu-230. Ser-251 contacts substrate.

The protein belongs to the ketol-acid reductoisomerase family. Mg(2+) is required as a cofactor.

It catalyses the reaction (2R)-2,3-dihydroxy-3-methylbutanoate + NADP(+) = (2S)-2-acetolactate + NADPH + H(+). The enzyme catalyses (2R,3R)-2,3-dihydroxy-3-methylpentanoate + NADP(+) = (S)-2-ethyl-2-hydroxy-3-oxobutanoate + NADPH + H(+). It participates in amino-acid biosynthesis; L-isoleucine biosynthesis; L-isoleucine from 2-oxobutanoate: step 2/4. Its pathway is amino-acid biosynthesis; L-valine biosynthesis; L-valine from pyruvate: step 2/4. Its function is as follows. Involved in the biosynthesis of branched-chain amino acids (BCAA). Catalyzes an alkyl-migration followed by a ketol-acid reduction of (S)-2-acetolactate (S2AL) to yield (R)-2,3-dihydroxy-isovalerate. In the isomerase reaction, S2AL is rearranged via a Mg-dependent methyl migration to produce 3-hydroxy-3-methyl-2-ketobutyrate (HMKB). In the reductase reaction, this 2-ketoacid undergoes a metal-dependent reduction by NADPH to yield (R)-2,3-dihydroxy-isovalerate. In Bacillus cereus (strain ATCC 14579 / DSM 31 / CCUG 7414 / JCM 2152 / NBRC 15305 / NCIMB 9373 / NCTC 2599 / NRRL B-3711), this protein is Ketol-acid reductoisomerase (NADP(+)) 1.